Consider the following 89-residue polypeptide: Acyl carrier protein MbtL (89 aa).

The Carrier domain maps to 7–82 (ESVSAALTEI…DLEAAIQAKV (76 aa)). Ser42 carries the O-(pantetheine 4'-phosphoryl)serine modification.

4'-phosphopantetheine is transferred from CoA to a specific serine of apo-ACP, leading to the activated holo-ACP form.

The protein resides in the cytoplasm. It participates in siderophore biosynthesis; mycobactin biosynthesis. In terms of biological role, acyl carrier protein involved in the formation of acyl-S-ACP intermediates within the mycobactin biosynthesis process. This chain is Acyl carrier protein MbtL (mbtL), found in Mycobacterium sp. (strain MCS).